Consider the following 1726-residue polypeptide: Merozoite surface protein 1 (1726 aa).

The signal sequence occupies residues 1–19 (MKIIFFLCSFLFFIINTQC). Positions 61 to 124 (KGASAQSGTS…SGTSGTSPSS (64 aa)) are enriched in low complexity. The disordered stretch occupies residues 61 to 149 (KGASAQSGTS…PPADASDSDA (89 aa)). Polar residues predominate over residues 125-134 (RSNTLPRSNT). An N-linked (GlcNAc...) asparagine glycan is attached at asparagine 133. The span at 135–144 (SSGASPPADA) shows a compositional bias: low complexity. N-linked (GlcNAc...) asparagine glycosylation is found at asparagine 272, asparagine 501, asparagine 567, and asparagine 638. Residues 735–771 (SETTEDGGHSTHTLSQSGETEVTEETEETEETVGHTT) are disordered. The span at 755–765 (EVTEETEETEE) shows a compositional bias: acidic residues. N-linked (GlcNAc...) asparagine glycans are attached at residues asparagine 827, asparagine 924, asparagine 944, asparagine 990, asparagine 1016, asparagine 1114, and asparagine 1221. The segment covering 914–952 (TGTSSTSSPGNTTVNTAQSATHSNSQNQQSNASSTNTQN) has biased composition (low complexity). The tract at residues 914–961 (TGTSSTSSPGNTTVNTAQSATHSNSQNQQSNASSTNTQNGVAVSSGPA) is disordered. Disordered regions lie at residues 1254 to 1284 (VTPP…TQIP) and 1476 to 1497 (KEKF…DEQK). Over residues 1270–1284 (VSGSSGSTKEETQIP) the composition is skewed to polar residues. Over residues 1481–1490 (SSPPTTPPSP) the composition is skewed to pro residues. An N-linked (GlcNAc...) asparagine glycan is attached at asparagine 1613. EGF-like domains lie at 1617–1657 (HQCV…VENP) and 1658–1705 (NPTC…IFCS). 6 cysteine pairs are disulfide-bonded: cysteine 1619–cysteine 1630, cysteine 1624–cysteine 1640, cysteine 1642–cysteine 1653, cysteine 1661–cysteine 1674, cysteine 1668–cysteine 1688, and cysteine 1690–cysteine 1704. The GPI-anchor amidated serine moiety is linked to residue serine 1705. Residues 1706-1726 (SSNFLGISFLLILMLILYSFI) constitute a propeptide, removed in mature form.

Forms a complex composed of subunits p83, p30, p38, and p42 which remain non-covalently associated; the complex is formed at the merozoite surface prior to egress from host erythrocytes. Forms a complex composed of processed MSP1 subunits, MSP6 subunit p36 and MSP7; the complex is formed at the merozoite surface prior to egress from host erythrocytes. Within the complex, interacts (via subunit p38) with MSP6 subunit p36 and (via subunits p83, p30 and p38) with MSP7 (via subunit p22). Forms a complex composed of MSP1, MSP6, DBLMSP1 and DBLMSP2. Within the complex, interacts (via subunit p38) with DBLMSP1 and DBLMSP2. Forms a complex composed of MSP1, and rhoptry proteins RhopH3, RAP1 and CLAG9/RhopH3. Within the complex, interacts (via subunits p42 and p19) with RhopH3 (via C-terminus). Forms a complex composed of MSP1, MSP6, MSP7, MSP9 and MSP3; within the complex, MSP6 and MSP9 mediate the binding to the host erythrocyte. Interacts (via subunits p19 and p42) with MSP9; the interaction is direct; MSP1 subunits p19 or p42, and MSP9 form a co-ligand complex that interacts with host SLC4A1/Band 3 protein. May interact with PFD6. Interacts with host spectrin. As to quaternary structure, interacts with host glycophorin GYPA in a sialic acid-independent manner. In terms of assembly, interacts with host proinflammatory cytokine S100P; the interaction blocks S100P inflammatory and chemotactic activities. Interacts with host SLC4A1/Band 3 (via 5ABC region) on the host erythrocyte surface in a sialic acid-independent manner. In terms of processing, the p190 precursor is cleaved by SUB1 prior to merozoite egress into 4 subunits p83, p30, p38, and p42 which remain non-covalently associated. SUB1-mediated proteolytic cleavage occurs in an orderly manner; the first cleavage occurs at the p30/p38 site, followed by cleavage at the p83/p30 site, the last cleavage occurs at the p38/p42 site. The order of cleavage is essential for parasite viability. SUB1-mediated processing is essential for merozoite egress. In a second processing step during erythrocyte invasion, p42 is cleaved by SUB2 into p33 and p19; the latter remains attached to the merozoite surface via its GPI-anchor and is endocytosed during the subsequent ring stage.

Its subcellular location is the cell membrane. The protein resides in the secreted. It is found in the vacuole membrane. In terms of biological role, during the asexual blood stage, involved in merozoite egress from host erythrocytes possibly via its interaction with the host cytoskeleton protein spectrin resulting in the destabilization of the host cytoskeleton and thus leading to erythrocyte cell membrane rupture. Involved in the binding to host erythrocytes and is required for host erythrocyte invasion. By binding to host proinflammatory cytokine S100P may interfere with host immune responses. Functionally, involved in merozoite invasion of host erythrocytes. May play a role in the biogenesis and/or function of the food vacuole during the intraerythrocytic development. The protein is Merozoite surface protein 1 of Plasmodium falciparum (isolate Palo Alto / Uganda).